Consider the following 385-residue polypeptide: 1-deoxy-D-xylulose 5-phosphate reductoisomerase (385 aa).

NADPH is bound by residues Thr-10, Gly-11, Ser-12, Ile-13, Lys-37, and Asn-124. Lys-125 serves as a coordination point for 1-deoxy-D-xylulose 5-phosphate. Residue Glu-126 coordinates NADPH. Asp-150 is a Mn(2+) binding site. Residues Ser-151, Glu-152, Ser-176, and His-199 each coordinate 1-deoxy-D-xylulose 5-phosphate. Glu-152 is a Mn(2+) binding site. Residue Gly-205 participates in NADPH binding. Residues Ser-212, Asn-217, Lys-218, and Glu-221 each coordinate 1-deoxy-D-xylulose 5-phosphate. Glu-221 is a binding site for Mn(2+).

This sequence belongs to the DXR family. It depends on Mg(2+) as a cofactor. Requires Mn(2+) as cofactor.

The catalysed reaction is 2-C-methyl-D-erythritol 4-phosphate + NADP(+) = 1-deoxy-D-xylulose 5-phosphate + NADPH + H(+). Its pathway is isoprenoid biosynthesis; isopentenyl diphosphate biosynthesis via DXP pathway; isopentenyl diphosphate from 1-deoxy-D-xylulose 5-phosphate: step 1/6. Functionally, catalyzes the NADPH-dependent rearrangement and reduction of 1-deoxy-D-xylulose-5-phosphate (DXP) to 2-C-methyl-D-erythritol 4-phosphate (MEP). The sequence is that of 1-deoxy-D-xylulose 5-phosphate reductoisomerase from Clostridium botulinum (strain Loch Maree / Type A3).